A 293-amino-acid polypeptide reads, in one-letter code: Elongation factor Ts (293 aa).

Positions 80–83 are involved in Mg(2+) ion dislocation from EF-Tu; the sequence is TDFV.

This sequence belongs to the EF-Ts family.

The protein localises to the cytoplasm. Associates with the EF-Tu.GDP complex and induces the exchange of GDP to GTP. It remains bound to the aminoacyl-tRNA.EF-Tu.GTP complex up to the GTP hydrolysis stage on the ribosome. The polypeptide is Elongation factor Ts (Staphylococcus aureus (strain Newman)).